A 272-amino-acid polypeptide reads, in one-letter code: Tumor necrosis factor receptor superfamily member 4 (272 aa).

Residues 1-19 (MYVWVQQPTALLLLALTLG) form the signal peptide. Residues 20-211 (VTARRLNCVK…PPTLVTPEGP (192 aa)) are Extracellular-facing. TNFR-Cys repeat units follow at residues 26–61 (NCVK…TLCH) and 62–103 (PCET…DTVC). Intrachain disulfides connect Cys27/Cys38, Cys39/Cys52, Cys42/Cys60, Cys63/Cys77, Cys80/Cys95, Cys83/Cys103, Cys105/Cys123, and Cys126/Cys139. The TNFR-Cys 3; truncated repeat unit spans residues 104 to 124 (RCRPGTQPRQDSGYKLGVDCV). Residues 125–165 (PCPPGHFSPGNNQACKPWTNCTLSGKQTRHPASDSLDAVCE) form a TNFR-Cys 4 repeat. An N-linked (GlcNAc...) asparagine glycan is attached at Asn144. Cys145 and Cys164 are disulfide-bonded. The chain crosses the membrane as a helical span at residues 212–236 (AFAVLLGLGLGLLAPLTVLLALYLL). Topologically, residues 237-272 (RKAWRLPNTPKPCWGNSFRTPIQEEHTDAHFTLAKI) are cytoplasmic.

In terms of assembly, interacts with TRAF2, TRAF3 and TRAF5. Expressed in CD4(+) T-cells and in T-helper Th17 cells (at protein level).

It localises to the membrane. In terms of biological role, receptor for TNFSF4/OX40L/GP34. Is a costimulatory molecule implicated in long-term T-cell immunity. This Mus musculus (Mouse) protein is Tumor necrosis factor receptor superfamily member 4 (Tnfrsf4).